The primary structure comprises 433 residues: PHO85 cyclin-10 (433 aa).

The segment covering 1-10 has biased composition (basic and acidic residues); the sequence is MDMTKNHTTD. Disordered stretches follow at residues 1 to 20 and 51 to 81; these read MDMT…GDIR and LTSE…TTDS. Residues 51–63 show a composition bias toward polar residues; sequence LTSEWDQSRSNTP.

It belongs to the cyclin family. PHO80 subfamily. In terms of assembly, forms a cyclin-CDK complex with PHO85. Interacts with GSY2, independent of the presence of PHO85.

The protein localises to the cytoplasm. Its function is as follows. Cyclin partner of the cyclin-dependent kinase (CDK) PHO85. Together with cyclin PCL8, negatively controls glycogen accumulation under favorable growth conditions. The PCL10-PHO85 cyclin-CDK holoenzyme has glycogen synthase kinase activity and phosphorylates and negatively regulates glycogen synthase GSY2. Also has minor GLC8 kinase activity. The sequence is that of PHO85 cyclin-10 (PCL10) from Saccharomyces cerevisiae (strain ATCC 204508 / S288c) (Baker's yeast).